The primary structure comprises 619 residues: Guanylate cyclase soluble subunit beta-1 (619 aa).

Residue histidine 105 coordinates heme. In terms of domain architecture, Guanylate cyclase spans 421–554 (TILFSGIVGF…NTVNLTSRTE (134 aa)).

This sequence belongs to the adenylyl cyclase class-4/guanylyl cyclase family. In terms of assembly, the active enzyme is formed by a heterodimer of an alpha and a beta subunit. Heterodimer with GUCY1A1. Can also form inactive homodimers in vitro. The cofactor is heme. In terms of tissue distribution, lung and brain.

Its subcellular location is the cytoplasm. It carries out the reaction GTP = 3',5'-cyclic GMP + diphosphate. With respect to regulation, activated by nitric oxide in the presence of magnesium or manganese ions, binding of NO to the heme iron increases catalytic activity up to 400 folds. Mediates responses to nitric oxide (NO) by catalyzing the biosynthesis of the signaling molecule cGMP. This chain is Guanylate cyclase soluble subunit beta-1 (GUCY1B1), found in Bos taurus (Bovine).